Reading from the N-terminus, the 496-residue chain is tRNA-2-methylthio-N(6)-dimethylallyladenosine synthase (496 aa).

The MTTase N-terminal domain maps to 10 to 126; the sequence is RTYEVRTYGC…LPALLERARV (117 aa). C19, C55, C89, C163, C167, and C170 together coordinate [4Fe-4S] cluster. One can recognise a Radical SAM core domain in the interval 149–380; that stretch reads RESAYAAWVS…ALVNEIAWEE (232 aa). A TRAM domain is found at 382–451; the sequence is KRLVGRRVEL…PHHLVADGPV (70 aa). The segment at 465–496 is disordered; the sequence is ARNAAPAPSSGVTLGMPTVGAPAPLPDAPACR. Residues 487-496 show a composition bias toward pro residues; it reads APLPDAPACR.

The protein belongs to the methylthiotransferase family. MiaB subfamily. Monomer. [4Fe-4S] cluster serves as cofactor.

It localises to the cytoplasm. It catalyses the reaction N(6)-dimethylallyladenosine(37) in tRNA + (sulfur carrier)-SH + AH2 + 2 S-adenosyl-L-methionine = 2-methylsulfanyl-N(6)-dimethylallyladenosine(37) in tRNA + (sulfur carrier)-H + 5'-deoxyadenosine + L-methionine + A + S-adenosyl-L-homocysteine + 2 H(+). Functionally, catalyzes the methylthiolation of N6-(dimethylallyl)adenosine (i(6)A), leading to the formation of 2-methylthio-N6-(dimethylallyl)adenosine (ms(2)i(6)A) at position 37 in tRNAs that read codons beginning with uridine. The chain is tRNA-2-methylthio-N(6)-dimethylallyladenosine synthase from Nocardioides sp. (strain ATCC BAA-499 / JS614).